Consider the following 182-residue polypeptide: Adenine phosphoribosyltransferase (182 aa).

Belongs to the purine/pyrimidine phosphoribosyltransferase family. As to quaternary structure, homodimer.

It localises to the cytoplasm. It carries out the reaction AMP + diphosphate = 5-phospho-alpha-D-ribose 1-diphosphate + adenine. Its pathway is purine metabolism; AMP biosynthesis via salvage pathway; AMP from adenine: step 1/1. Catalyzes a salvage reaction resulting in the formation of AMP, that is energically less costly than de novo synthesis. The protein is Adenine phosphoribosyltransferase of Streptomyces galbus.